Here is a 500-residue protein sequence, read N- to C-terminus: Glycerol kinase (500 aa).

Thr-13 lines the ADP pocket. ATP is bound by residues Thr-13, Thr-14, and Ser-15. Residue Thr-13 participates in sn-glycerol 3-phosphate binding. Arg-17 lines the ADP pocket. Sn-glycerol 3-phosphate is bound by residues Arg-83, Glu-84, Tyr-136, and Asp-246. The glycerol site is built by Arg-83, Glu-84, Tyr-136, Asp-246, and Gln-247. ADP is bound by residues Thr-268 and Gly-311. ATP-binding residues include Thr-268, Gly-311, Gln-315, and Gly-412. Positions 412 and 416 each coordinate ADP.

Belongs to the FGGY kinase family.

The catalysed reaction is glycerol + ATP = sn-glycerol 3-phosphate + ADP + H(+). It participates in polyol metabolism; glycerol degradation via glycerol kinase pathway; sn-glycerol 3-phosphate from glycerol: step 1/1. Inhibited by fructose 1,6-bisphosphate (FBP). In terms of biological role, key enzyme in the regulation of glycerol uptake and metabolism. Catalyzes the phosphorylation of glycerol to yield sn-glycerol 3-phosphate. This chain is Glycerol kinase, found in Francisella tularensis subsp. novicida (strain U112).